Reading from the N-terminus, the 153-residue chain is D-erythrulose-4-phosphate isomerase 1 (153 aa).

The Proton acceptor role is filled by Cys69.

It belongs to the LacAB/RpiB family.

The enzyme catalyses D-erythrulose 4-phosphate = D-erythrose 4-phosphate. Its pathway is carbohydrate metabolism; erythritol degradation. It functions in the pathway carbohydrate metabolism; D-threitol degradation. Its function is as follows. Catalyzes the isomerization of D-erythrulose-4P to D-erythrose-4P. Involved in the degradation pathways of erythritol and D-threitol, that allow M.smegmatis to grow on these compounds as the sole carbon source. This Mycolicibacterium smegmatis (strain ATCC 700084 / mc(2)155) (Mycobacterium smegmatis) protein is D-erythrulose-4-phosphate isomerase 1.